The chain runs to 452 residues: Cobyrinate a,c-diamide synthase (452 aa).

A GATase cobBQ-type domain is found at 244–429; the sequence is RIAVARDRAF…LHLHWGTQAW (186 aa). Cys325 serves as the catalytic Nucleophile.

Belongs to the CobB/CbiA family. Mg(2+) serves as cofactor.

It catalyses the reaction cob(II)yrinate + 2 L-glutamine + 2 ATP + 2 H2O = cob(II)yrinate a,c diamide + 2 L-glutamate + 2 ADP + 2 phosphate + 2 H(+). It participates in cofactor biosynthesis; adenosylcobalamin biosynthesis; cob(II)yrinate a,c-diamide from sirohydrochlorin (anaerobic route): step 10/10. Functionally, catalyzes the ATP-dependent amidation of the two carboxylate groups at positions a and c of cobyrinate, using either L-glutamine or ammonia as the nitrogen source. The sequence is that of Cobyrinate a,c-diamide synthase from Gloeobacter violaceus (strain ATCC 29082 / PCC 7421).